The sequence spans 842 residues: MPLSYQHFRRILLLDEEAGPLEEELPRLADEDLNRRVAEDLNLQLPNVSIPWTHKVGNFSGLYSSTIPVFNPHWKTPSFPDIHLHQDIINKCEQFVGPLTVNEKRRLNLVMPARFFPISTKYLPLEKGIKPYYPDNVVNHYFQTRHYLHTLWKAGILYKRETTRSASFCGSPYSWEQELHHGAFLDGPSRMGEESFHHQSSGIFSRPPVGSSIQSKHQKSRLGPQSQQRPLDRSQQGRSGSIRAGVHSPTRRPFGVEPSGSRHAKNIASRSASCLHQSAVRKAAYPNHSTFERHSSSGHAVEFHNIPPSSAGSQSKRPVFSCWWLQFRNSEPCSDYCLSHLVNLLEDWGPCTEHGRHHIRIPRTPARVTGGVFLVDKNPHNTAESRLVVDFSQFSRGSSRVSWPKFAVPNLQSLTNLLSSNLSWLSLDVSAAFYHLPLHPAAMPHLLVGSSGLSRYVARLSSNSRIINHHYGTLPNLHDSCSRNLYVSLMLLFKTFGRKLHLYSHPIIMGFRKIPMGVGLSPFLLAQFTSAICSVVRRAFPHCLAFSYMDDVVLGAKSVQHLESLYTSVTNFLLSLGIHLNPNKTKRWGYSLNFMGYVIGSWGSLPQEHIRIKIKDCFRKLPVNRPIDWKVCQRIVGLLGFAAPFTQCGYPALMPLYACIQSKQAFTFSPTYKAFLCKQYLNLYPVARQRPGLCQVFADATPTGWGLAIGHQRMRGTFVAPLPIHTAELLAACFARSRSGAKLIGTDNSVVLSRKYTSFPWLLGCAANWILRGTSFVYVPSALNPADDPSRGRLGVCRPLLRLPFQPTTGRTSLYAVSPSVPSHLPDRVHFASPLHVAWRPP.

The tract at residues Met-1–Gln-177 is terminal protein domain (TP). The segment at Glu-178 to Leu-345 is spacer. The disordered stretch occupies residues Asp-186–Ser-273. Residues Gly-223 to Ser-239 are compositionally biased toward polar residues. The polymerase/reverse transcriptase domain (RT) stretch occupies residues Glu-346–Gln-689. The region spanning Arg-356–Ile-599 is the Reverse transcriptase domain. Asp-428, Asp-550, and Asp-551 together coordinate Mg(2+).

It belongs to the hepadnaviridae P protein family.

The enzyme catalyses DNA(n) + a 2'-deoxyribonucleoside 5'-triphosphate = DNA(n+1) + diphosphate. It carries out the reaction Endonucleolytic cleavage to 5'-phosphomonoester.. Activated by host HSP70 and HSP40 in vitro to be able to bind the epsilon loop of the pgRNA. Because deletion of the RNase H region renders the protein partly chaperone-independent, the chaperones may be needed indirectly to relieve occlusion of the RNA-binding site by this domain. Inhibited by several reverse-transcriptase inhibitors: Lamivudine, Adefovir and Entecavir. Its function is as follows. Multifunctional enzyme that converts the viral RNA genome into dsDNA in viral cytoplasmic capsids. This enzyme displays a DNA polymerase activity that can copy either DNA or RNA templates, and a ribonuclease H (RNase H) activity that cleaves the RNA strand of RNA-DNA heteroduplexes in a partially processive 3'- to 5'-endonucleasic mode. Neo-synthesized pregenomic RNA (pgRNA) are encapsidated together with the P protein, and reverse-transcribed inside the nucleocapsid. Initiation of reverse-transcription occurs first by binding the epsilon loop on the pgRNA genome, and is initiated by protein priming, thereby the 5'-end of (-)DNA is covalently linked to P protein. Partial (+)DNA is synthesized from the (-)DNA template and generates the relaxed circular DNA (RC-DNA) genome. After budding and infection, the RC-DNA migrates in the nucleus, and is converted into a plasmid-like covalently closed circular DNA (cccDNA). The activity of P protein does not seem to be necessary for cccDNA generation, and is presumably released from (+)DNA by host nuclear DNA repair machinery. This Homo sapiens (Human) protein is Protein P.